Here is a 106-residue protein sequence, read N- to C-terminus: uncharacterized protein (106 aa).

The protein belongs to the HesB/IscA family.

This is an uncharacterized protein from Sinorhizobium fredii (strain NBRC 101917 / NGR234).